Consider the following 373-residue polypeptide: LIM domain-binding protein 2 (373 aa).

2 disordered regions span residues 244–287 (APPA…KTPA) and 327–373 (QYDA…QASQ). The segment covering 263-280 (STSSTSNSSAGNTTNSAG) has biased composition (low complexity). The region spanning 298 to 337 (DVMVVGEPTLMGGEFGDEDERLITRLENTQYDAANGMDDE) is the LIM interaction domain (LID) domain. A compositionally biased stretch (polar residues) spans 341-373 (NNSPALGNNSPWNSKPPATQETKSENAPPQASQ).

It belongs to the LDB family. Interacts with LHX9. Interacts with SLK; leading to negatively regulate SLK kinase activity. Interacts with LMO4. As to quaternary structure, interacts with PITX1. Interacts with LHX3. In terms of processing, ubiquitinated by RLIM/RNF12, leading to its degradation by the proteasome. Expressed in multiple tissues including heart, brain, liver, kidney, testis, lung and muscle, with expression highest in the brain, trigeminal ganglia, and lung.

The protein resides in the nucleus. Transcription cofactor. Binds to the LIM domain of a wide variety of LIM domain-containing transcription factors. Its function is as follows. Regulates the transcriptional activity of LIM-containing proteins such as LHX3 or PITX1. The chain is LIM domain-binding protein 2 (Ldb2) from Mus musculus (Mouse).